A 468-amino-acid polypeptide reads, in one-letter code: Phosphatidylinositol-binding clathrin assembly protein LAP (468 aa).

The ENTH domain maps to 16–158; that stretch reads RHSLAGQGLA…LSYRAMAFDF (143 aa). Residues 438–468 form a disordered region; it reads NAGDGTAKYDGGAGSSPFDWGATDDDGGAAQ. Over residues 459 to 468 the composition is skewed to acidic residues; sequence ATDDDGGAAQ.

It belongs to the PICALM/SNAP91 family. Binds clathrin and phosphatidylinositol 4,5-bisphosphate. In terms of tissue distribution, in embryos, expression is seen in central and peripheral nervous systems (brain and ventral nerve cord) and Garland cells. Coexpressed with clathrin at presynaptic boutons of neuromuscular junctions.

The protein localises to the membrane. It is found in the clathrin-coated pit. Its subcellular location is the golgi apparatus. The protein resides in the cytoplasmic vesicle. It localises to the clathrin-coated vesicle. Its function is as follows. Assembly protein recruiting clathrin and adaptor protein complex 2 (AP2) to cell membranes at sites of coated-pit formation and clathrin-vesicle assembly. May be required to determine the amount of membrane to be recycled, possibly by regulating the size of the clathrin cage. Involved in AP2-dependent clathrin-mediated endocytosis at the neuromuscular junction. The chain is Phosphatidylinositol-binding clathrin assembly protein LAP (lap) from Drosophila melanogaster (Fruit fly).